The primary structure comprises 283 residues: Release factor glutamine methyltransferase (283 aa).

Residues 120-124 (GTGSG), Asp143, Phe172, and Asn187 each bind S-adenosyl-L-methionine. 187-190 (NPPY) is a binding site for substrate.

It belongs to the protein N5-glutamine methyltransferase family. PrmC subfamily.

It catalyses the reaction L-glutaminyl-[peptide chain release factor] + S-adenosyl-L-methionine = N(5)-methyl-L-glutaminyl-[peptide chain release factor] + S-adenosyl-L-homocysteine + H(+). Functionally, methylates the class 1 translation termination release factors RF1/PrfA and RF2/PrfB on the glutamine residue of the universally conserved GGQ motif. In Moorella thermoacetica (strain ATCC 39073 / JCM 9320), this protein is Release factor glutamine methyltransferase.